A 1496-amino-acid chain; its full sequence is DNA-directed RNA polymerase subunit beta' (1496 aa).

Residues Cys-70, Cys-72, Cys-85, and Cys-88 each coordinate Zn(2+). The Mg(2+) site is built by Asp-461, Asp-463, and Asp-465. Cys-908, Cys-982, Cys-989, and Cys-992 together coordinate Zn(2+). Positions 1467 to 1496 (DKDMQVEGESEVPAIPPVAEGSAPEAPPAE) are disordered.

The protein belongs to the RNA polymerase beta' chain family. The RNAP catalytic core consists of 2 alpha, 1 beta, 1 beta' and 1 omega subunit. When a sigma factor is associated with the core the holoenzyme is formed, which can initiate transcription. Requires Mg(2+) as cofactor. The cofactor is Zn(2+).

It catalyses the reaction RNA(n) + a ribonucleoside 5'-triphosphate = RNA(n+1) + diphosphate. In terms of biological role, DNA-dependent RNA polymerase catalyzes the transcription of DNA into RNA using the four ribonucleoside triphosphates as substrates. The protein is DNA-directed RNA polymerase subunit beta' of Paramagnetospirillum magneticum (strain ATCC 700264 / AMB-1) (Magnetospirillum magneticum).